The primary structure comprises 167 residues: Large ribosomal subunit protein uL10 (167 aa).

It belongs to the universal ribosomal protein uL10 family. Part of the ribosomal stalk of the 50S ribosomal subunit. The N-terminus interacts with L11 and the large rRNA to form the base of the stalk. The C-terminus forms an elongated spine to which L12 dimers bind in a sequential fashion forming a multimeric L10(L12)X complex.

Functionally, forms part of the ribosomal stalk, playing a central role in the interaction of the ribosome with GTP-bound translation factors. This is Large ribosomal subunit protein uL10 from Tolumonas auensis (strain DSM 9187 / NBRC 110442 / TA 4).